Consider the following 467-residue polypeptide: Nodulation protein T (467 aa).

An N-terminal signal peptide occupies residues 1–17; sequence MRFTRYTTPFFSLLLSG. A lipid anchor (N-palmitoyl cysteine) is attached at Cys-18. The S-diacylglycerol cysteine moiety is linked to residue Cys-18.

Belongs to the outer membrane factor (OMF) (TC 1.B.17) family.

Its subcellular location is the cell membrane. This chain is Nodulation protein T (nodT), found in Rhizobium leguminosarum bv. trifolii.